Reading from the N-terminus, the 281-residue chain is Aldo-keto reductase MAP_3007 (281 aa).

The active-site Proton donor is tyrosine 56. Positions 196, 234, 236, 237, 238, 245, and 272 each coordinate NADPH.

This sequence belongs to the aldo/keto reductase family.

This chain is Aldo-keto reductase MAP_3007, found in Mycolicibacterium paratuberculosis (strain ATCC BAA-968 / K-10) (Mycobacterium paratuberculosis).